We begin with the raw amino-acid sequence, 704 residues long: Fatty acid oxidation complex subunit alpha (704 aa).

The tract at residues 1–190 (MSEQKAFSLK…KLGVVDACVP (190 aa)) is enoyl-CoA hydratase. Residues 308–704 (TAVNKVGVLG…RAGEGRNFYD (397 aa)) are 3-hydroxyacyl-CoA dehydrogenase.

In the N-terminal section; belongs to the enoyl-CoA hydratase/isomerase family. The protein in the central section; belongs to the 3-hydroxyacyl-CoA dehydrogenase family. As to quaternary structure, heterotetramer of two alpha chains (FadJ) and two beta chains (FadI).

It is found in the cytoplasm. The catalysed reaction is a (3S)-3-hydroxyacyl-CoA = a (2E)-enoyl-CoA + H2O. It catalyses the reaction a 4-saturated-(3S)-3-hydroxyacyl-CoA = a (3E)-enoyl-CoA + H2O. It carries out the reaction a (3S)-3-hydroxyacyl-CoA + NAD(+) = a 3-oxoacyl-CoA + NADH + H(+). The enzyme catalyses (3S)-3-hydroxybutanoyl-CoA = (3R)-3-hydroxybutanoyl-CoA. The protein operates within lipid metabolism; fatty acid beta-oxidation. Its function is as follows. Catalyzes the formation of a hydroxyacyl-CoA by addition of water on enoyl-CoA. Also exhibits 3-hydroxyacyl-CoA epimerase and 3-hydroxyacyl-CoA dehydrogenase activities. The protein is Fatty acid oxidation complex subunit alpha of Vibrio campbellii (strain ATCC BAA-1116).